Consider the following 257-residue polypeptide: UPF0246 protein CLL_A2361 (257 aa).

It belongs to the UPF0246 family.

The protein is UPF0246 protein CLL_A2361 of Clostridium botulinum (strain Eklund 17B / Type B).